The sequence spans 98 residues: NADH-ubiquinone oxidoreductase chain 4L (98 aa).

3 helical membrane passes run 1-21 (MPFI…GLLI), 29-49 (SLLC…LMTL), and 61-81 (IVLL…LVLI).

Belongs to the complex I subunit 4L family. In terms of assembly, core subunit of respiratory chain NADH dehydrogenase (Complex I) which is composed of 45 different subunits.

It is found in the mitochondrion inner membrane. It carries out the reaction a ubiquinone + NADH + 5 H(+)(in) = a ubiquinol + NAD(+) + 4 H(+)(out). In terms of biological role, core subunit of the mitochondrial membrane respiratory chain NADH dehydrogenase (Complex I) which catalyzes electron transfer from NADH through the respiratory chain, using ubiquinone as an electron acceptor. Part of the enzyme membrane arm which is embedded in the lipid bilayer and involved in proton translocation. This is NADH-ubiquinone oxidoreductase chain 4L (MT-ND4L) from Aotus trivirgatus (Three-striped night monkey).